Here is a 307-residue protein sequence, read N- to C-terminus: Protoheme IX farnesyltransferase (307 aa).

Transmembrane regions (helical) follow at residues 29-49 (VISL…RGWP), 51-71 (LGLL…AGVF), 101-120 (AAIF…WVWA), 124-143 (AAWM…TLWL), 151-171 (IVLG…AVTG), 179-199 (FLFA…ALMI), 218-238 (RLTV…SVMP), 239-259 (VFLG…GWLL), and 280-300 (VAVP…VAGA).

Belongs to the UbiA prenyltransferase family. Protoheme IX farnesyltransferase subfamily.

Its subcellular location is the cell membrane. The catalysed reaction is heme b + (2E,6E)-farnesyl diphosphate + H2O = Fe(II)-heme o + diphosphate. It functions in the pathway porphyrin-containing compound metabolism; heme O biosynthesis; heme O from protoheme: step 1/1. In terms of biological role, converts heme B (protoheme IX) to heme O by substitution of the vinyl group on carbon 2 of heme B porphyrin ring with a hydroxyethyl farnesyl side group. This is Protoheme IX farnesyltransferase from Deinococcus geothermalis (strain DSM 11300 / CIP 105573 / AG-3a).